The sequence spans 391 residues: Processive diacylglycerol beta-glucosyltransferase (391 aa).

It belongs to the glycosyltransferase 28 family. UgtP subfamily.

It localises to the cell membrane. The enzyme catalyses a 1,2-diacyl-3-O-(beta-D-glucopyranosyl)-sn-glycerol + UDP-alpha-D-glucose = a 1,2-diacyl-3-O-(beta-D-Glc-(1-&gt;6)-beta-D-Glc)-sn-glycerol + UDP + H(+). It carries out the reaction a 1,2-diacyl-sn-glycerol + UDP-alpha-D-glucose = a 1,2-diacyl-3-O-(beta-D-glucopyranosyl)-sn-glycerol + UDP + H(+). The protein operates within glycolipid metabolism; diglucosyl-diacylglycerol biosynthesis. Processive glucosyltransferase involved in the biosynthesis of both the bilayer- and non-bilayer-forming membrane glucolipids. Is able to successively transfer two glucosyl residues to diacylglycerol (DAG), thereby catalyzing the formation of beta-monoglucosyl-DAG (3-O-(beta-D-glucopyranosyl)-1,2-diacyl-sn-glycerol) and beta-diglucosyl-DAG (3-O-(beta-D-glucopyranosyl-beta-(1-&gt;6)-D-glucopyranosyl)-1,2-diacyl-sn-glycerol). Beta-diglucosyl-DAG is the predominant glycolipid found in Bacillales and is also used as a membrane anchor for lipoteichoic acid (LTA). This chain is Processive diacylglycerol beta-glucosyltransferase, found in Staphylococcus epidermidis (strain ATCC 35984 / DSM 28319 / BCRC 17069 / CCUG 31568 / BM 3577 / RP62A).